Reading from the N-terminus, the 264-residue chain is Spermidine/putrescine transport system permease protein PotC (264 aa).

The Cytoplasmic portion of the chain corresponds to 1-7 (MIGRLLR). Residues 8–27 (GGFMTAIYAYLYIPIIILIV) traverse the membrane as a helical segment. Over 28–65 (NSFNSSRFGINWQGFTTKWYSLLMNNDSLLQAAQHSLT) the chain is Periplasmic. The ABC transmembrane type-1 domain maps to 60–248 (AQHSLTMAVF…VLSLVMVIAS (189 aa)). The helical transmembrane segment at 66–85 (MAVFSATFATLIGSLTAVAL) threads the bilayer. Residues 86-100 (YRYRFRGKPFVSGML) are Cytoplasmic-facing. The chain crosses the membrane as a helical span at residues 101–120 (FVVMMSPDIVMAISLLVLFM). Over 121–128 (LLGIQLGF) the chain is Periplasmic. Residues 129–148 (WSLLFSHITFCLPFVVVTVY) traverse the membrane as a helical segment. Residues 149-176 (SRLKGFDVRMLEAAKDLGASEFTILRKI) are Cytoplasmic-facing. The helical transmembrane segment at 177–196 (ILPLAMPAVAAGWVLSFTLS) threads the bilayer. Topologically, residues 197–231 (MDDVVVSSFVTGPSYEILPLKIYSMVKVGVSPEVN) are periplasmic. Residues 232 to 251 (ALATILLVLSLVMVIASQLI) traverse the membrane as a helical segment. Over 252–264 (ARDKTKGNTGDVK) the chain is Cytoplasmic.

The protein belongs to the binding-protein-dependent transport system permease family. CysTW subfamily.

It is found in the cell inner membrane. Required for the activity of the bacterial periplasmic transport system of putrescine and spermidine. This Escherichia coli O157:H7 protein is Spermidine/putrescine transport system permease protein PotC (potC).